Reading from the N-terminus, the 192-residue chain is Superoxide dismutase [Fe] (192 aa).

Fe cation contacts are provided by His-27, His-74, Asp-157, and His-161.

The protein belongs to the iron/manganese superoxide dismutase family. As to quaternary structure, homodimer. Requires Fe cation as cofactor.

The catalysed reaction is 2 superoxide + 2 H(+) = H2O2 + O2. Its function is as follows. Destroys superoxide anion radicals which are normally produced within the cells and which are toxic to biological systems. The protein is Superoxide dismutase [Fe] (sodB) of Bordetella pertussis (strain Tohama I / ATCC BAA-589 / NCTC 13251).